The chain runs to 115 residues: Protein TrbA (115 aa).

Transmembrane regions (helical) follow at residues 5 to 25 (YLKM…GYFF), 39 to 59 (LVFL…LWFL), 60 to 80 (CGAI…AALP), and 91 to 111 (IFIC…FIRG).

Its subcellular location is the cell membrane. The chain is Protein TrbA (trbA) from Escherichia coli (strain K12).